A 273-amino-acid polypeptide reads, in one-letter code: Undecaprenyl-diphosphatase (273 aa).

Helical transmembrane passes span 4–24 (LILIKAFLLGIVEGLTEFLPI), 43–63 (KAQVFTVAIQLGAILSVCWEY), 82–102 (FVLNLCVAFLPAAILGLLFIK), 108–128 (LFHPLPVAIALVTGGVLILWA), 183–203 (AAEFSFFLAIPIMFAATFYDV), 217–237 (MFVVGSIAAFISALIAIRGFI), and 253–273 (IGFGLIVLLTAHFGLINWSAG).

Belongs to the UppP family.

Its subcellular location is the cell inner membrane. It carries out the reaction di-trans,octa-cis-undecaprenyl diphosphate + H2O = di-trans,octa-cis-undecaprenyl phosphate + phosphate + H(+). In terms of biological role, catalyzes the dephosphorylation of undecaprenyl diphosphate (UPP). Confers resistance to bacitracin. This chain is Undecaprenyl-diphosphatase, found in Nitrosomonas eutropha (strain DSM 101675 / C91 / Nm57).